The primary structure comprises 598 residues: Arginine--tRNA ligase (598 aa).

The short motif at alanine 139–histidine 149 is the 'HIGH' region element.

This sequence belongs to the class-I aminoacyl-tRNA synthetase family. Monomer.

The protein resides in the cytoplasm. It catalyses the reaction tRNA(Arg) + L-arginine + ATP = L-arginyl-tRNA(Arg) + AMP + diphosphate. This chain is Arginine--tRNA ligase, found in Bradyrhizobium sp. (strain ORS 278).